Here is a 99-residue protein sequence, read N- to C-terminus: Ferredoxin, heterocyst (99 aa).

A 2Fe-2S ferredoxin-type domain is found at 4-96 (YQVRLINKKQ…NCTIKTHQEP (93 aa)). Positions 42, 47, 50, and 80 each coordinate [2Fe-2S] cluster.

Belongs to the 2Fe2S plant-type ferredoxin family. The cofactor is [2Fe-2S] cluster.

Its function is as follows. Ferredoxins are iron-sulfur proteins that transfer electrons in a wide variety of metabolic reactions. Donates electrons to the nitrogenase. The protein is Ferredoxin, heterocyst (fdxH) of Nostoc sp. (strain PCC 7120 / SAG 25.82 / UTEX 2576).